The primary structure comprises 447 residues: Exodeoxyribonuclease 7 large subunit (447 aa).

This sequence belongs to the XseA family. In terms of assembly, heterooligomer composed of large and small subunits.

It is found in the cytoplasm. The catalysed reaction is Exonucleolytic cleavage in either 5'- to 3'- or 3'- to 5'-direction to yield nucleoside 5'-phosphates.. In terms of biological role, bidirectionally degrades single-stranded DNA into large acid-insoluble oligonucleotides, which are then degraded further into small acid-soluble oligonucleotides. The chain is Exodeoxyribonuclease 7 large subunit from Exiguobacterium sibiricum (strain DSM 17290 / CCUG 55495 / CIP 109462 / JCM 13490 / 255-15).